The primary structure comprises 223 residues: Uracil-DNA glycosylase (223 aa).

Catalysis depends on D66, which acts as the Proton acceptor.

The protein belongs to the uracil-DNA glycosylase (UDG) superfamily. UNG family.

It is found in the cytoplasm. The catalysed reaction is Hydrolyzes single-stranded DNA or mismatched double-stranded DNA and polynucleotides, releasing free uracil.. Functionally, excises uracil residues from the DNA which can arise as a result of misincorporation of dUMP residues by DNA polymerase or due to deamination of cytosine. This is Uracil-DNA glycosylase from Sulfurimonas denitrificans (strain ATCC 33889 / DSM 1251) (Thiomicrospira denitrificans (strain ATCC 33889 / DSM 1251)).